A 454-amino-acid chain; its full sequence is Ornithine aminotransferase (454 aa).

Lys280 bears the N6-(pyridoxal phosphate)lysine mark.

This sequence belongs to the class-III pyridoxal-phosphate-dependent aminotransferase family. Requires pyridoxal 5'-phosphate as cofactor.

It localises to the cytoplasm. The enzyme catalyses a 2-oxocarboxylate + L-ornithine = L-glutamate 5-semialdehyde + an L-alpha-amino acid. Its pathway is amino-acid biosynthesis; L-proline biosynthesis; L-glutamate 5-semialdehyde from L-ornithine: step 1/1. The polypeptide is Ornithine aminotransferase (otaA) (Emericella nidulans (strain FGSC A4 / ATCC 38163 / CBS 112.46 / NRRL 194 / M139) (Aspergillus nidulans)).